The chain runs to 102 residues: Glutaredoxin-C13 (102 aa).

A Glutaredoxin domain is found at 1–101 (MDKVMRMSSE…PLIKPYQSIL (101 aa)). A disulfide bond links cysteine 21 and cysteine 24.

It belongs to the glutaredoxin family. CC-type subfamily.

The protein resides in the cytoplasm. Its function is as follows. Has a glutathione-disulfide oxidoreductase activity in the presence of NADPH and glutathione reductase. Reduces low molecular weight disulfides and proteins. The sequence is that of Glutaredoxin-C13 (GRXC13) from Arabidopsis thaliana (Mouse-ear cress).